A 454-amino-acid polypeptide reads, in one-letter code: Signal recognition particle protein (454 aa).

GTP contacts are provided by residues 102–109 (GLQGTGKT), 184–188 (DTAGR), and 242–245 (TKMD).

The protein belongs to the GTP-binding SRP family. SRP54 subfamily. As to quaternary structure, part of the signal recognition particle protein translocation system, which is composed of SRP and FtsY.

The protein resides in the cytoplasm. The catalysed reaction is GTP + H2O = GDP + phosphate + H(+). Involved in targeting and insertion of nascent membrane proteins into the cytoplasmic membrane. Binds to the hydrophobic signal sequence of the ribosome-nascent chain (RNC) as it emerges from the ribosomes. The SRP-RNC complex is then targeted to the cytoplasmic membrane where it interacts with the SRP receptor FtsY. This is Signal recognition particle protein from Aquifex aeolicus (strain VF5).